The following is a 309-amino-acid chain: Aspartate carbamoyltransferase catalytic subunit (309 aa).

Carbamoyl phosphate is bound by residues R56 and T57. K84 is an L-aspartate binding site. Carbamoyl phosphate is bound by residues R106, H136, and Q139. 2 residues coordinate L-aspartate: R169 and R221. Carbamoyl phosphate is bound by residues A264 and P265.

Belongs to the aspartate/ornithine carbamoyltransferase superfamily. ATCase family. As to quaternary structure, heterododecamer (2C3:3R2) of six catalytic PyrB chains organized as two trimers (C3), and six regulatory PyrI chains organized as three dimers (R2).

It carries out the reaction carbamoyl phosphate + L-aspartate = N-carbamoyl-L-aspartate + phosphate + H(+). Its pathway is pyrimidine metabolism; UMP biosynthesis via de novo pathway; (S)-dihydroorotate from bicarbonate: step 2/3. Its function is as follows. Catalyzes the condensation of carbamoyl phosphate and aspartate to form carbamoyl aspartate and inorganic phosphate, the committed step in the de novo pyrimidine nucleotide biosynthesis pathway. The chain is Aspartate carbamoyltransferase catalytic subunit from Limosilactobacillus reuteri subsp. reuteri (strain JCM 1112) (Lactobacillus reuteri).